A 287-amino-acid polypeptide reads, in one-letter code: 4,4'-diapophytoene synthase (287 aa).

(2E,6E)-farnesyl diphosphate-binding positions include 18 to 21 (HSKS), Y41, and R45. Mg(2+) is bound by residues D48 and D52. Q165 contributes to the (2E,6E)-farnesyl diphosphate binding site. N168 is a binding site for Mg(2+). R171 lines the (2E,6E)-farnesyl diphosphate pocket. Mg(2+) is bound at residue D172. Y248 contributes to the (2E,6E)-farnesyl diphosphate binding site.

The protein belongs to the phytoene/squalene synthase family. CrtM subfamily. It depends on Mg(2+) as a cofactor.

It catalyses the reaction 2 (2E,6E)-farnesyl diphosphate = 15-cis-4,4'-diapophytoene + 2 diphosphate. Its pathway is carotenoid biosynthesis; staphyloxanthin biosynthesis; staphyloxanthin from farnesyl diphosphate: step 1/5. Its function is as follows. Involved in the biosynthesis of the yellow-orange carotenoid staphyloxanthin, which plays a role in the virulence via its protective function against oxidative stress. Catalyzes the head-to-head condensation of two molecules of farnesyl diphosphate (FPP) into the colorless C(30) carotenoid 4,4'-diapophytoene (dehydrosqualene). The protein is 4,4'-diapophytoene synthase (crtM) of Staphylococcus aureus (strain Mu50 / ATCC 700699).